Here is a 1147-residue protein sequence, read N- to C-terminus: Disease resistance protein RPP4 (1147 aa).

The 165-residue stretch at 11–175 folds into the TIR domain; it reads RRYDVFPSFS…KIANDVSNKL (165 aa). The active site involves Glu86. The NB-ARC domain occupies 189–446; that stretch reads EDHIKAIKSI…CFFNGFKVSN (258 aa). 18 LRR repeats span residues 548–573, 584–606, 608–629, 630–653, 655–676, 698–721, 722–743, 744–766, 767–790, 792–813, 814–836, 837–860, 926–950, 952–973, 974–996, 997–1017, 1018–1042, and 1044–1064; these read MRNL…LWSK, PLKL…TFKA, YLVN…TLPL, GSLK…SLAI, LEEL…IQNA, MCNL…IYLP, RKLK…NFKA, EYLV…TQPL, LERL…IQNA, TKLI…DLNL, ESLE…KMGC, LGSL…SKAT, LKRL…IGNL, HRLV…DVNL, SSLI…PLIS, TRIE…DLTR, and SVLL…IFRL.

Interacts with RSH1.

It carries out the reaction NAD(+) + H2O = ADP-D-ribose + nicotinamide + H(+). Its function is as follows. TIR-NB-LRR receptor-like protein that confers resistance to the pathogen Hyaloperonospora arabidopsis isolates Emoy2 and Emwa1 (downy mildew disease). Plays a role in the regulation of temperature response during plant growth and survival. This Arabidopsis thaliana (Mouse-ear cress) protein is Disease resistance protein RPP4.